Reading from the N-terminus, the 473-residue chain is Probable ribonuclease FAU-1 (473 aa).

Belongs to the FAU-1 family.

Functionally, probable RNase involved in rRNA stability through maturation and/or degradation of precursor rRNAs. Binds to RNA in loop regions with AU-rich sequences. The protein is Probable ribonuclease FAU-1 of Hyperthermus butylicus (strain DSM 5456 / JCM 9403 / PLM1-5).